Consider the following 96-residue polypeptide: Non-specific lipid-transfer protein 2 (96 aa).

A signal peptide spans 1–27; sequence MMRKLAVLVLAVAMVAACGGGVVGVAG. Intrachain disulfides connect Cys30–Cys62, Cys38–Cys52, Cys53–Cys88, and Cys64–Cys95.

Functionally, transfer lipids across membranes. May play a role in plant defense or in the biosynthesis of cuticle layers. In Oryza sativa subsp. japonica (Rice), this protein is Non-specific lipid-transfer protein 2 (LTP-2).